The following is a 252-amino-acid chain: Accessory gland protein Acp32CD (252 aa).

The N-terminal stretch at 1–19 (MWRMRMRLLTGYLVLLALG) is a signal peptide. The disordered stretch occupies residues 42-252 (PDGEGGTGVD…GAKEDDYEEM (211 aa)). The span at 44 to 69 (GEGGTGVDGGGGGAGGGAAGPGGGTG) shows a compositional bias: gly residues. Basic and acidic residues-rich tracts occupy residues 104 to 122 (AIGKKESGGGSDGKSDSKD), 142 to 153 (SDSKDAKDRQDK), 159 to 171 (QEGKRTDHSHHSS), and 209 to 225 (NGARESSQENQDAKEVA).

As to expression, seminal fluid.

It localises to the secreted. Responsible for physiological and behavioral changes in mated female flies. This chain is Accessory gland protein Acp32CD (Acp32CD), found in Drosophila melanogaster (Fruit fly).